The chain runs to 388 residues: Protein TsgA homolog (388 aa).

The next 12 helical transmembrane spans lie at 11–31, 50–70, 77–97, 101–121, 133–153, 160–180, 206–226, 244–264, 268–288, 298–318, 332–352, and 360–380; these read WISF…GMIM, TFLN…IEII, IFSF…NSIF, INMF…TFII, LLLL…IVTA, IIWY…FLLT, VFLL…FISW, SLVS…SFII, NLYR…YCFI, YIII…ITLA, LILL…SPIV, and TLIS…LIYF.

The protein belongs to the major facilitator superfamily. TsgA family.

It is found in the cell membrane. The sequence is that of Protein TsgA homolog from Buchnera aphidicola subsp. Acyrthosiphon pisum (strain 5A).